The primary structure comprises 480 residues: Flotillin-like protein 2 (480 aa).

A lipid anchor (S-palmitoyl cysteine) is attached at C37. A coiled-coil region spans residues 237–257; that stretch reads ENQREAEVAQANSELAKKKAA.

The protein belongs to the band 7/mec-2 family. Flotillin subfamily. In terms of processing, may be palmitoylated. As to expression, expressed in flowers in green pods. Primarily expressed in vascular tissues. Upon induction of nodulation, expansion of expression in the root cortex in the region of elongating root hairs, which will eventually become colonized by bacteria. Expressed in the infection zone in nodules.

The protein localises to the cell membrane. Its subcellular location is the membrane. It localises to the caveola. Its function is as follows. May act as a scaffolding protein within caveolar membranes, functionally participating in formation of caveolae or caveolae-like vesicles. Required for early symbiotic events and nodules formation. The polypeptide is Flotillin-like protein 2 (FLOT2) (Medicago truncatula (Barrel medic)).